The chain runs to 670 residues: tRNA 5-methylaminomethyl-2-thiouridine biosynthesis bifunctional protein MnmC (670 aa).

A tRNA (mnm(5)s(2)U34)-methyltransferase region spans residues 1 to 242 (MTFSVQHAEI…KRECLSGLKI (242 aa)). The interval 269-670 (IGGGIASLCA…KKWLKGSKVE (402 aa)) is FAD-dependent cmnm(5)s(2)U34 oxidoreductase.

In the N-terminal section; belongs to the methyltransferase superfamily. tRNA (mnm(5)s(2)U34)-methyltransferase family. The protein in the C-terminal section; belongs to the DAO family. Requires FAD as cofactor.

The protein resides in the cytoplasm. The enzyme catalyses 5-aminomethyl-2-thiouridine(34) in tRNA + S-adenosyl-L-methionine = 5-methylaminomethyl-2-thiouridine(34) in tRNA + S-adenosyl-L-homocysteine + H(+). Its function is as follows. Catalyzes the last two steps in the biosynthesis of 5-methylaminomethyl-2-thiouridine (mnm(5)s(2)U) at the wobble position (U34) in tRNA. Catalyzes the FAD-dependent demodification of cmnm(5)s(2)U34 to nm(5)s(2)U34, followed by the transfer of a methyl group from S-adenosyl-L-methionine to nm(5)s(2)U34, to form mnm(5)s(2)U34. This Haemophilus influenzae (strain PittEE) protein is tRNA 5-methylaminomethyl-2-thiouridine biosynthesis bifunctional protein MnmC.